The sequence spans 264 residues: Anamorsin homolog 2 (264 aa).

Residues 1 to 142 form an N-terminal SAM-like domain region; it reads MAATAAALAV…KVSWSMGSSF (142 aa). Residues 143–174 are linker; the sequence is PLKKATKGLPKIQIDDDSELIDEDSLLTEDDL. [2Fe-2S] cluster-binding residues include C185, C194, C197, and C199. The segment at 185 to 199 is fe-S binding site A; the sequence is CEVGATRKACKNCTC. Positions 225, 228, 236, and 239 each coordinate [4Fe-4S] cluster. 2 consecutive short sequence motifs (cx2C motif) follow at residues 225–228 and 236–239; these read CGNC and CGTC. Residues 225–239 are fe-S binding site B; sequence CGNCGLGDAFRCGTC.

The protein belongs to the anamorsin family. Monomer. It depends on [2Fe-2S] cluster as a cofactor. The cofactor is [4Fe-4S] cluster.

It is found in the cytoplasm. The protein localises to the mitochondrion intermembrane space. Functionally, component of the cytosolic iron-sulfur (Fe-S) protein assembly (CIA) machinery. Required for the maturation of extramitochondrial Fe-S proteins. Part of an electron transfer chain functioning in an early step of cytosolic Fe-S biogenesis, facilitating the de novo assembly of a [4Fe-4S] cluster on the cytosolic Fe-S scaffold complex. Electrons are transferred from NADPH via a FAD- and FMN-containing diflavin oxidoreductase. Together with the diflavin oxidoreductase, also required for the assembly of the diferric tyrosyl radical cofactor of ribonucleotide reductase (RNR), probably by providing electrons for reduction during radical cofactor maturation in the catalytic small subunit. This is Anamorsin homolog 2 from Oryza sativa subsp. japonica (Rice).